We begin with the raw amino-acid sequence, 177 residues long: Large ribosomal subunit protein uL6 (177 aa).

Belongs to the universal ribosomal protein uL6 family. Part of the 50S ribosomal subunit.

Functionally, this protein binds to the 23S rRNA, and is important in its secondary structure. It is located near the subunit interface in the base of the L7/L12 stalk, and near the tRNA binding site of the peptidyltransferase center. This chain is Large ribosomal subunit protein uL6, found in Pseudomonas fluorescens (strain ATCC BAA-477 / NRRL B-23932 / Pf-5).